We begin with the raw amino-acid sequence, 367 residues long: Glutamate 5-kinase (367 aa).

Lysine 17 lines the ATP pocket. The substrate site is built by serine 57, aspartate 144, and asparagine 156. ATP is bound by residues 176–177 (SD) and 217–223 (TGGMTSK). The region spanning 279-357 (AGALTLDEGA…SELPGELRRP (79 aa)) is the PUA domain.

This sequence belongs to the glutamate 5-kinase family.

The protein localises to the cytoplasm. It catalyses the reaction L-glutamate + ATP = L-glutamyl 5-phosphate + ADP. The protein operates within amino-acid biosynthesis; L-proline biosynthesis; L-glutamate 5-semialdehyde from L-glutamate: step 1/2. Catalyzes the transfer of a phosphate group to glutamate to form L-glutamate 5-phosphate. This chain is Glutamate 5-kinase, found in Mycolicibacterium paratuberculosis (strain ATCC BAA-968 / K-10) (Mycobacterium paratuberculosis).